We begin with the raw amino-acid sequence, 251 residues long: Elongation factor Ts (251 aa).

The tract at residues 82–85 (TDFV) is involved in Mg(2+) ion dislocation from EF-Tu. The interval 215–251 (QMGQKAPEPVAAAPQVEEKAPEPAAKDNPPAKGKKKK) is disordered. Residues 219 to 229 (KAPEPVAAAPQ) show a composition bias toward low complexity. The segment covering 230–239 (VEEKAPEPAA) has biased composition (basic and acidic residues).

This sequence belongs to the EF-Ts family.

The protein localises to the cytoplasm. Its function is as follows. Associates with the EF-Tu.GDP complex and induces the exchange of GDP to GTP. It remains bound to the aminoacyl-tRNA.EF-Tu.GTP complex up to the GTP hydrolysis stage on the ribosome. The protein is Elongation factor Ts of Microcystis aeruginosa (strain NIES-843 / IAM M-2473).